We begin with the raw amino-acid sequence, 555 residues long: Heterochromatin protein 1-binding protein 3 (555 aa).

Alanine 2 bears the N-acetylalanine mark. Serine 6 is modified (phosphoserine). The interval 29–134 (KLGEKVEDNT…KEKKVKKTIP (106 aa)) is disordered. Position 51 is a phosphothreonine (threonine 51). The segment covering 51–67 (TPPKSKLAEGVEEKPEP) has biased composition (basic and acidic residues). A Glycyl lysine isopeptide (Lys-Gly) (interchain with G-Cter in SUMO2) cross-link involves residue lysine 64. The residue at position 85 (threonine 85) is a Phosphothreonine. Lysine 97 is covalently cross-linked (Glycyl lysine isopeptide (Lys-Gly) (interchain with G-Cter in SUMO2)). The span at 100-127 (PENEEKEENKPSEETKKDEKDQSKEKEK) shows a compositional bias: basic and acidic residues. 3 positions are modified to phosphoserine: serine 142, serine 155, and serine 156. The 76-residue stretch at 157-232 (PRPKMDAILT…GASGSFVVVQ (76 aa)) folds into the H15 1 domain. The residue at position 190 (lysine 190) is an N6-acetyllysine. Positions 227-254 (SFVVVQKSRKPPQKSRNRKNRSSAVDPE) are disordered. Basic residues predominate over residues 233–247 (KSRKPPQKSRNRKNR). 2 positions are modified to phosphoserine: serine 248 and serine 249. H15 domains follow at residues 255–330 (PQVK…QLKK) and 337–413 (LGGS…QLCF). Residue lysine 258 forms a Glycyl lysine isopeptide (Lys-Gly) (interchain with G-Cter in SUMO2) linkage. The disordered stretch occupies residues 422-555 (LFPKKEPDDS…TMKKSFKAKK (134 aa)). Over residues 430 to 452 (DSKDEDEDEDEDDSSEEDSEDEE) the composition is skewed to acidic residues. Phosphoserine is present on residues serine 443, serine 444, and serine 448. Over residues 491–512 (GKTRPLPKKAPPKAKSPAKKAR) the composition is skewed to basic residues. Over residues 513 to 532 (PSPSVIKKPSGSSSKKPAAS) the composition is skewed to low complexity. Positions 545-555 (STMKKSFKAKK) are enriched in basic residues.

Interacts (via PxVxL motif) with CBX5.

The protein resides in the nucleus. The protein localises to the chromosome. In terms of biological role, component of heterochromatin that maintains heterochromatin integrity during G1/S progression and regulates the duration of G1 phase to critically influence cell proliferative capacity. May play a role in hypoxia-induced oncogenesis. This is Heterochromatin protein 1-binding protein 3 (HP1BP3) from Bos taurus (Bovine).